The chain runs to 356 residues: Glutamine synthetase root isozyme 3 (356 aa).

A GS beta-grasp domain is found at 19–99 (IIAEYIWIGG…VMCDCYTPAG (81 aa)). One can recognise a GS catalytic domain in the interval 106-356 (KRYNAAKIFS…IAETTIIWKP (251 aa)).

It belongs to the glutamine synthetase family. Homooctamer. Found in all the tissues examined with higher expression found in tissues of the root.

Its subcellular location is the cytoplasm. It carries out the reaction L-glutamate + NH4(+) + ATP = L-glutamine + ADP + phosphate + H(+). Its function is as follows. Plays a role in the flow of nitrogen into nitrogenous organic compounds. This chain is Glutamine synthetase root isozyme 3 (GLN4), found in Zea mays (Maize).